The sequence spans 170 residues: MSKAAKKKSSKKRSGSEAAQFDQKTIQEFKEAFGIMDQNKDGIIDKSDLKDLYASMGQIAPDSQIDAMIKEASGPINFTVFLTLFGERLTGTDPEATIVGAFAMFDKKDCGKIKEDDLIKILQNKRGEPLDEDEVKAMYKGKPPIEGGEVDYKAFAHLITTGAQDELASA.

A compositionally biased stretch (basic residues) spans 1–13 (MSKAAKKKSSKKR). The disordered stretch occupies residues 1 to 22 (MSKAAKKKSSKKRSGSEAAQFD). EF-hand domains are found at residues 24 to 59 (KTIQ…MGQI) and 93 to 128 (DPEA…KRGE). 4 residues coordinate Ca(2+): Asp37, Asn39, Asp41, and Asp48.

As to quaternary structure, myosin is a hexamer of 2 heavy chains and 4 light chains (two regulatory light chains and two essential light chains).

The protein is Myosin regulatory light chain 2 (mlc-2) of Caenorhabditis elegans.